Reading from the N-terminus, the 1058-residue chain is MPKRTDIKKIMVIGSGPIVIGQAAEFDYAGTQACLALKEEGYEVVLVNSNPATIMTDKEIADRVYIEPLTTEFVSRILRKERPDALLPTLGGQTGLNLAMSLSETGILNELGVELLGTKLSAINQAEDREQFKALMKALKQPIPESDIVHSVEEALLFASQIGYPVIVRPAFTLGGTGGGICTNDIELEDITAKGLKLSPVNQCLIEKSIAGFKEIEYEVMRDSADNALVVCNMENFDPVGIHTGDSIVFAPSQTLSDYEHQLLRDASLKIIRALKIEGGCNVQLALDPNSFDYYVIEVNPRVSRSSALASKATGYPIAKIAAKIAIGLQLDEMINPITGKTYAMFEPALDYVVAKMPRFPFDKFESADRHLGTQMKATGEVMAIGRTIEESLLKACRSLEIGIYHNECKEFSLVDDQELLMKLIKAQDDRLFYLSEALKRGMTIDELSQLTKINPFFLDKLLHILEIERQLSLEKWQKWPLEHAKKYGFSDKKIAELWQASESDIRDFRIQHGIKPVYKMVDTCAAEFESQTPYYYSTYAFENESQASPNKSILVLGSGPIRIGQGIEFDYATVHSVKAIQAAGYEAIIMNSNPETVSTDFSISDKLYFEPLTVEDVMNVIDLERPEGVILQFGGQTAINLAEALDKANVPILGTQVRDLDRAENRQLFEKALHDINIPQPLGQTVTNEQEALQVARRIGFPVLVRPSYVIGGRAMQIVTQEEDLLTYMQSAVKVSSDQPVLIDSYILGQECEVDAISDGQDVLIPGIMEHIEAAGVHSGDSMAVYPPQNLSEDIIQTIIDYTKRLAINLNCKGMMNIQFVVKDKTVYVIEVNPRASRTVPFMSKVTGIPMAQVATKLILGSSLKELGYEDGLYQKSSLVHVKAPIFSFNKLSKVDSLLGPEMKSTGEVIGSDSSLEKALYKAFEASYMHVPDFGNIIFTISDDKKAESLRLAKGFSALGYRIFATSGTSDYFLQHQLKTQKIHKIGEQSDHILELMKSGKIQAVINTDSKNGMMNRDGQLIRSIANEQGIPLFTSLDTAKAMLRVLESRSFSIQSL.

Residues 1 to 401 form a carboxyphosphate synthetic domain region; it reads MPKRTDIKKI…SLLKACRSLE (401 aa). Positions 129, 169, 175, 176, 208, 210, 215, 241, 242, 243, 284, and 298 each coordinate ATP. In terms of domain architecture, ATP-grasp 1 spans 133–327; it reads KALMKALKQP…IAKIAAKIAI (195 aa). The Mg(2+) site is built by Gln284, Glu298, and Asn300. Mn(2+) is bound by residues Gln284, Glu298, and Asn300. Positions 402–546 are oligomerization domain; sequence IGIYHNECKE…YSTYAFENES (145 aa). The tract at residues 547–929 is carbamoyl phosphate synthetic domain; it reads QASPNKSILV…ALYKAFEASY (383 aa). The 191-residue stretch at 671 to 861 folds into the ATP-grasp 2 domain; sequence EKALHDINIP…MAQVATKLIL (191 aa). ATP is bound by residues Arg707, Ser746, Ile748, Glu752, Gly777, Val778, His779, Ser780, Gln820, and Glu832. Positions 820, 832, and 834 each coordinate Mg(2+). Mn(2+) contacts are provided by Gln820, Glu832, and Asn834. The MGS-like domain occupies 930 to 1058; it reads MHVPDFGNII…ESRSFSIQSL (129 aa). The tract at residues 930–1058 is allosteric domain; sequence MHVPDFGNII…ESRSFSIQSL (129 aa).

The protein belongs to the CarB family. As to quaternary structure, composed of two chains; the small (or glutamine) chain promotes the hydrolysis of glutamine to ammonia, which is used by the large (or ammonia) chain to synthesize carbamoyl phosphate. Tetramer of heterodimers (alpha,beta)4. Requires Mg(2+) as cofactor. It depends on Mn(2+) as a cofactor.

It catalyses the reaction hydrogencarbonate + L-glutamine + 2 ATP + H2O = carbamoyl phosphate + L-glutamate + 2 ADP + phosphate + 2 H(+). The enzyme catalyses hydrogencarbonate + NH4(+) + 2 ATP = carbamoyl phosphate + 2 ADP + phosphate + 2 H(+). The protein operates within amino-acid biosynthesis; L-arginine biosynthesis; carbamoyl phosphate from bicarbonate: step 1/1. Its pathway is pyrimidine metabolism; UMP biosynthesis via de novo pathway; (S)-dihydroorotate from bicarbonate: step 1/3. Functionally, large subunit of the glutamine-dependent carbamoyl phosphate synthetase (CPSase). CPSase catalyzes the formation of carbamoyl phosphate from the ammonia moiety of glutamine, carbonate, and phosphate donated by ATP, constituting the first step of 2 biosynthetic pathways, one leading to arginine and/or urea and the other to pyrimidine nucleotides. The large subunit (synthetase) binds the substrates ammonia (free or transferred from glutamine from the small subunit), hydrogencarbonate and ATP and carries out an ATP-coupled ligase reaction, activating hydrogencarbonate by forming carboxy phosphate which reacts with ammonia to form carbamoyl phosphate. The chain is Carbamoyl phosphate synthase large chain from Streptococcus uberis (strain ATCC BAA-854 / 0140J).